A 127-amino-acid polypeptide reads, in one-letter code: Unclassified hydrophobin 5 (127 aa).

The first 24 residues, 1–24, serve as a signal peptide directing secretion; it reads MFNKQTNAIVLLFTFALFATLAVA. 4 disulfides stabilise this stretch: Cys-39–Cys-107, Cys-46–Cys-101, Cys-47–Cys-92, and Cys-108–Cys-121.

Belongs to the fungal hydrophobin family. Self-assembles to form functional amyloid fibrils called rodlets. Self-assembly into fibrillar rodlets occurs spontaneously at hydrophobic:hydrophilic interfaces and the rodlets further associate laterally to form amphipathic monolayers.

It is found in the secreted. The protein resides in the cell wall. Aerial growth, conidiation, and dispersal of filamentous fungi in the environment rely upon a capability of their secreting small amphipathic proteins called hydrophobins (HPBs) with low sequence identity. Class I can self-assemble into an outermost layer of rodlet bundles on aerial cell surfaces, conferring cellular hydrophobicity that supports fungal growth, development and dispersal; whereas Class II form highly ordered films at water-air interfaces through intermolecular interactions but contribute nothing to the rodlet structure. This chain is Unclassified hydrophobin 5, found in Pleurotus ostreatus (strain PC15) (Oyster mushroom).